A 248-amino-acid polypeptide reads, in one-letter code: MSFTVVIPARYQSTRLPGKPLADIGGKPMVQWVYEQASKAGADLVIVATDDQRIVDAVKAFGGEVCLTRDDHESGTERLAEVVEKYQLADDHIVVNVQGDEPLIPDTIIRQVADNLANNNAPMATLGVEIDHEDEVFNPNAVKVVLDKDGYAMYFSRASIPWDRDNYAKSPKEIHHNLLRHVGIYAYRAGFINTYINWEPSALEKVEALEQLRVLWYGEKIHVAVAIDAPPAGVDTPEDLEKVRALIG.

The protein belongs to the KdsB family.

It localises to the cytoplasm. The enzyme catalyses 3-deoxy-alpha-D-manno-oct-2-ulosonate + CTP = CMP-3-deoxy-beta-D-manno-octulosonate + diphosphate. The protein operates within nucleotide-sugar biosynthesis; CMP-3-deoxy-D-manno-octulosonate biosynthesis; CMP-3-deoxy-D-manno-octulosonate from 3-deoxy-D-manno-octulosonate and CTP: step 1/1. Its pathway is bacterial outer membrane biogenesis; lipopolysaccharide biosynthesis. Activates KDO (a required 8-carbon sugar) for incorporation into bacterial lipopolysaccharide in Gram-negative bacteria. This Photobacterium profundum (strain SS9) protein is 3-deoxy-manno-octulosonate cytidylyltransferase.